The primary structure comprises 711 residues: Polyribonucleotide nucleotidyltransferase (711 aa).

2 residues coordinate Mg(2+): aspartate 486 and aspartate 492. The KH domain occupies 553 to 612 (PRIHTIKINPDKIKDVIGKGGSVIRALTEETGTTIEIEDDGTVKIAATDGEKAKNAIRRI). The S1 motif domain maps to 622–690 (GRVYNGKVTR…RQGRIRLSIK (69 aa)). Residues 689 to 711 (IKEATEQSQPAAAPEAPAAEQGE) form a disordered region. The span at 694 to 711 (EQSQPAAAPEAPAAEQGE) shows a compositional bias: low complexity.

It belongs to the polyribonucleotide nucleotidyltransferase family. As to quaternary structure, component of the RNA degradosome, which is a multiprotein complex involved in RNA processing and mRNA degradation. Mg(2+) serves as cofactor.

The protein resides in the cytoplasm. It carries out the reaction RNA(n+1) + phosphate = RNA(n) + a ribonucleoside 5'-diphosphate. In terms of biological role, involved in mRNA degradation. Catalyzes the phosphorolysis of single-stranded polyribonucleotides processively in the 3'- to 5'-direction. The sequence is that of Polyribonucleotide nucleotidyltransferase from Escherichia fergusonii (strain ATCC 35469 / DSM 13698 / CCUG 18766 / IAM 14443 / JCM 21226 / LMG 7866 / NBRC 102419 / NCTC 12128 / CDC 0568-73).